The primary structure comprises 222 residues: Interleukin-12 subunit alpha (222 aa).

An N-terminal signal peptide occupies residues 1–25 (MCPLRNLLLVATLVLLNHLDHLSLG). 3 disulfide bridges follow: C40–C113, C67–C199, and C88–C126. Residues N42 and N96 are each glycosylated (N-linked (GlcNAc...) asparagine).

Belongs to the IL-6 superfamily. As to quaternary structure, heterodimer with IL12B; disulfide-linked. This heterodimer is known as interleukin IL-12. Heterodimer with EBI3/IL27B; not disulfide-linked. This heterodimer is known as interleukin IL-35. Interacts with NBR1; this interaction promotes IL-12 secretion.

The protein resides in the secreted. Its function is as follows. Heterodimerizes with IL12B to form the IL-12 cytokine or with EBI3/IL27B to form the IL-35 cytokine. IL-12 is primarily produced by professional antigen-presenting cells (APCs) such as B-cells and dendritic cells (DCs) as well as macrophages and granulocytes and regulates T-cell and natural killer-cell responses, induces the production of interferon-gamma (IFN-gamma), favors the differentiation of T-helper 1 (Th1) cells and is an important link between innate resistance and adaptive immunity. Mechanistically, exerts its biological effects through a receptor composed of IL12R1 and IL12R2 subunits. Binding to the receptor results in the rapid tyrosine phosphorylation of a number of cellular substrates including the JAK family kinases TYK2 and JAK2. In turn, recruited STAT4 gets phosphorylated and translocates to the nucleus where it regulates cytokine/growth factor responsive genes. As part of IL-35, plays essential roles in maintaining the immune homeostasis of the liver microenvironment and also functions as an immune-suppressive cytokine. Mediates biological events through unconventional receptors composed of IL12RB2 and gp130/IL6ST heterodimers or homodimers. Signaling requires the transcription factors STAT1 and STAT4, which form a unique heterodimer that binds to distinct DNA sites. This chain is Interleukin-12 subunit alpha (IL12A), found in Sus scrofa (Pig).